Consider the following 267-residue polypeptide: Potassium channel regulatory protein (267 aa).

One can recognise a BTB domain in the interval 5–74 (ELVTLNVGGK…LRTQQLLLPT (70 aa)).

In terms of assembly, can form homooligomers. Interacts with KCNA1 (via cytoplasmic N-terminal domain) and KCNA4.

It localises to the endoplasmic reticulum. Inhibits potassium fluxes in cells. May regulate Kv1 family channel proteins by retaining a fraction of channels in endomembranes. The polypeptide is Potassium channel regulatory protein (KCNRG) (Bos taurus (Bovine)).